A 198-amino-acid chain; its full sequence is MSEMQTREMLIGEIKLFNKWSYDFIEVRDPSLKKYICLKPVYLPHSGGRHEHKRFGKALVPIVERLINNVMRPGRNMGKKHLAYNIVKKSFELIYLKTGENPLQVLVRAIENAAPREETTRIMYGGITYHVSVDIAPLRRIDLALRHLTEGARLKAFHNPISIEEALAEEIALAASNDPKSYAVQKKEEIERIALSSR.

This sequence belongs to the universal ribosomal protein uS7 family. As to quaternary structure, part of the 30S ribosomal subunit.

Its function is as follows. One of the primary rRNA binding proteins, it binds directly to 16S rRNA where it nucleates assembly of the head domain of the 30S subunit. Is located at the subunit interface close to the decoding center. This is Small ribosomal subunit protein uS7 from Desulfurococcus amylolyticus (strain DSM 18924 / JCM 16383 / VKM B-2413 / 1221n) (Desulfurococcus kamchatkensis).